Here is a 71-residue protein sequence, read N- to C-terminus: UPF0437 protein asl1434 (71 aa).

This sequence belongs to the UPF0437 family.

The polypeptide is UPF0437 protein asl1434 (Nostoc sp. (strain PCC 7120 / SAG 25.82 / UTEX 2576)).